Here is a 463-residue protein sequence, read N- to C-terminus: Phosphomannomutase/phosphoglucomutase (463 aa).

The active-site Phosphoserine intermediate is the serine 108. Mg(2+) contacts are provided by serine 108, aspartate 242, aspartate 244, and aspartate 246. The substrate site is built by glutamate 325, serine 327, and histidine 329.

Belongs to the phosphohexose mutase family. Monomer. Mg(2+) is required as a cofactor.

It catalyses the reaction alpha-D-mannose 1-phosphate = D-mannose 6-phosphate. The catalysed reaction is alpha-D-glucose 1-phosphate = alpha-D-glucose 6-phosphate. Its pathway is nucleotide-sugar biosynthesis; GDP-alpha-D-mannose biosynthesis; alpha-D-mannose 1-phosphate from D-fructose 6-phosphate: step 2/2. It functions in the pathway bacterial outer membrane biogenesis; lipopolysaccharide biosynthesis. Functionally, the phosphomannomutase activity produces a precursor for alginate polymerization. The alginate layer causes a mucoid phenotype and provides a protective barrier against host immune defenses and antibiotics. Also involved in core-LPS biosynthesis due to its phosphoglucomutase activity. Essential for biofilm production. The chain is Phosphomannomutase/phosphoglucomutase (algC) from Pseudomonas putida (strain ATCC 47054 / DSM 6125 / CFBP 8728 / NCIMB 11950 / KT2440).